Consider the following 121-residue polypeptide: Large ribosomal subunit protein bL20c (121 aa).

It belongs to the bacterial ribosomal protein bL20 family.

The protein localises to the plastid. It localises to the chloroplast. Functionally, binds directly to 23S ribosomal RNA and is necessary for the in vitro assembly process of the 50S ribosomal subunit. It is not involved in the protein synthesizing functions of that subunit. This Lotus japonicus (Lotus corniculatus var. japonicus) protein is Large ribosomal subunit protein bL20c.